Consider the following 570-residue polypeptide: Keratin, type I cytoskeletal 10 (570 aa).

Positions 1-16 are enriched in low complexity; it reads MSVLYSSSSKQFSSSR. A disordered region spans residues 1-29; the sequence is MSVLYSSSSKQFSSSRSGGGGGGGSVRVS. Residues 1 to 143 form a head region; it reads MSVLYSSSSK…GDGGSLLSGN (143 aa). Phosphoserine is present on residues Ser-15 and Ser-17. Arg-32 is modified (asymmetric dimethylarginine; alternate). Omega-N-methylarginine; alternate is present on Arg-32. Ser-34, Ser-45, Ser-48, and Ser-168 each carry phosphoserine. The tract at residues 144–179 is coil 1A; that stretch reads GRVTMQNLNDRLASYMDKVRALEESNYELEGKIKEW. One can recognise an IF rod domain in the interval 144–458; that stretch reads GRVTMQNLND…SLLEGEGSSS (315 aa). Residues 180–200 are linker 1; the sequence is YEKHGNSSQREPRDYSKYYKT. The coil 1B stretch occupies residues 201 to 292; the sequence is IEDLKGQILT…KNHEEEMRDL (92 aa). The linker 12 stretch occupies residues 293-315; that stretch reads QNVSTGDVNVEMNAAPGVDLTQL. Residues 316–454 are coil 2; that stretch reads LNNMRNQYEQ…QTYRSLLEGE (139 aa). A disordered region spans residues 451 to 570; sequence LEGEGSSSGG…GDQSSKGPRY (120 aa). Residues 455–570 are tail; it reads GSSSGGGGGR…GDQSSKGPRY (116 aa). The span at 456-562 shows a compositional bias: gly residues; sequence SSSGGGGGRR…GGFKSSGGGD (107 aa).

This sequence belongs to the intermediate filament family. As to quaternary structure, (Microbial infection) Interacts (via C-terminal tail domain) with the S.aureus clumping factor, clfB; this interaction probably mediates S.aureus attachment to the highly keratinized squamous epithelial cells from the nasal cavity. Heterotetramer of two type I and two type II keratins. Heterodimer with KRT1. Two heterodimers of KRT1 and KRT10 form a heterotetramer. The KRT10 subunit in the heterotetramer is probably disulfide-linked. Interacts with PLEC isoform 1C, when in a heterodimer with KRT1. In terms of assembly, (Microbial infection) Interacts (via the C-terminal tail domain) with S.pneumoniae serine-rich repeat protein PsrP; this interaction probably mediates S.pneumoniae adherence to lung tissue and subsequent pathogenesis. As to expression, expressed in the suprabasal layers of the epidermis throughout the entire sole (at protein level). Expressed in the infundibular regions of the ear, the interscale regions of the tail, and the interfollicular epidermis of the back. Expressed in lung tissue from young mice (at protein level).

It localises to the secreted. It is found in the extracellular space. Its subcellular location is the cell surface. The protein resides in the cytoplasm. In terms of biological role, plays a role in the establishment of the epidermal barrier on plantar skin. Involved in the maintenance of cell layer development and keratin filament bundles in suprabasal cells of the epithelium. Functionally, (Microbial infection) Acts as a mediator of S.aureus adherence to desquamated nasal epithelial cells via clfB, and hence may play a role in nasal colonization. Its function is as follows. (Microbial infection) Binds S.pneumoniae PsrP, mediating adherence of the bacteria to lung cell lines. This is Keratin, type I cytoskeletal 10 (Krt10) from Mus musculus (Mouse).